A 289-amino-acid chain; its full sequence is Ribosomal protein L11 methyltransferase (289 aa).

S-adenosyl-L-methionine-binding residues include T135, G156, D179, and N225.

Belongs to the methyltransferase superfamily. PrmA family.

It localises to the cytoplasm. The catalysed reaction is L-lysyl-[protein] + 3 S-adenosyl-L-methionine = N(6),N(6),N(6)-trimethyl-L-lysyl-[protein] + 3 S-adenosyl-L-homocysteine + 3 H(+). In terms of biological role, methylates ribosomal protein L11. The sequence is that of Ribosomal protein L11 methyltransferase from Chlorobaculum parvum (strain DSM 263 / NCIMB 8327) (Chlorobium vibrioforme subsp. thiosulfatophilum).